A 608-amino-acid chain; its full sequence is Dolichyl-diphosphooligosaccharide--protein glycosyltransferase subunit 1 (608 aa).

The first 24 residues, 1–24 (MEAPAVCLLPLLLLLWAWAPAPGR), serve as a signal peptide directing secretion. Over 25-435 (ASPEALPLVN…VVHYTFNKVL (411 aa)) the chain is Lumenal. Position 188 is an N6-acetyllysine (lysine 188). An N-linked (GlcNAc...) asparagine glycan is attached at asparagine 300. Residues 436 to 456 (MLQEPLLVVAAFYILFFTVIV) traverse the membrane as a helical segment. At 457–607 (YVRLDFSITK…VTKIDHILDA (151 aa)) the chain is on the cytoplasmic side. Lysine 539 bears the N6-acetyllysine; alternate mark. Residue lysine 539 forms a Glycyl lysine isopeptide (Lys-Gly) (interchain with G-Cter in SUMO2); alternate linkage.

It belongs to the OST1 family. Component of the oligosaccharyltransferase (OST) complex. OST exists in two different complex forms which contain common core subunits RPN1, RPN2, OST48, OST4, DAD1 and TMEM258, either STT3A or STT3B as catalytic subunits, and form-specific accessory subunits. STT3A complex assembly occurs through the formation of 3 subcomplexes. Subcomplex 1 contains RPN1 and TMEM258, subcomplex 2 contains the STT3A-specific subunits STT3A, DC2/OSTC, and KCP2 as well as the core subunit OST4, and subcomplex 3 contains RPN2, DAD1, and OST48. The STT3A complex can form stable complexes with the Sec61 complex or with both the Sec61 and TRAP complexes. Interacts with TMEM35A/NACHO. Ubiquitinated by the ECS(ASB11) complex. In terms of processing, ufmylated by UFL1 in response to endoplasmic reticulum stress, promoting reticulophagy of endoplasmic reticulum sheets. As to expression, detected in liver (at protein level).

The protein localises to the endoplasmic reticulum membrane. The protein operates within protein modification; protein glycosylation. Functionally, subunit of the oligosaccharyl transferase (OST) complex that catalyzes the initial transfer of a defined glycan (Glc(3)Man(9)GlcNAc(2) in eukaryotes) from the lipid carrier dolichol-pyrophosphate to an asparagine residue within an Asn-X-Ser/Thr consensus motif in nascent polypeptide chains, the first step in protein N-glycosylation. N-glycosylation occurs cotranslationally and the complex associates with the Sec61 complex at the channel-forming translocon complex that mediates protein translocation across the endoplasmic reticulum (ER). All subunits are required for a maximal enzyme activity. This is Dolichyl-diphosphooligosaccharide--protein glycosyltransferase subunit 1 from Sus scrofa (Pig).